The sequence spans 127 residues: Aspartate 1-decarboxylase (127 aa).

Ser-25 serves as the catalytic Schiff-base intermediate with substrate; via pyruvic acid. Ser-25 is modified (pyruvic acid (Ser)). Residue Thr-57 coordinates substrate. Tyr-58 functions as the Proton donor in the catalytic mechanism. A substrate-binding site is contributed by 73-75 (GAA).

Belongs to the PanD family. As to quaternary structure, heterooctamer of four alpha and four beta subunits. Requires pyruvate as cofactor. Post-translationally, is synthesized initially as an inactive proenzyme, which is activated by self-cleavage at a specific serine bond to produce a beta-subunit with a hydroxyl group at its C-terminus and an alpha-subunit with a pyruvoyl group at its N-terminus.

It is found in the cytoplasm. It catalyses the reaction L-aspartate + H(+) = beta-alanine + CO2. It participates in cofactor biosynthesis; (R)-pantothenate biosynthesis; beta-alanine from L-aspartate: step 1/1. In terms of biological role, catalyzes the pyruvoyl-dependent decarboxylation of aspartate to produce beta-alanine. The sequence is that of Aspartate 1-decarboxylase from Clostridium botulinum (strain ATCC 19397 / Type A).